Reading from the N-terminus, the 459-residue chain is MPPGVAVCFSSLFIRLVCMAFLTSSDKALWHLALPMIFSNITVPLLGLVDTAVIGHLDSPVYLGGVAVGATATSFLFMLLLFLRMSTTGLTAQAYGAKNPQALARTLVQPLLLALGAGALIALLRTPIIDLALHIVGGSEAVLEQARRFLEIRWLSAPASLANLVLLGWLLGVQYARAPVILLVVGNILNIVLDVWLVMGLHMNVQGAALATVIAEYATLLIGLLMVRKILKLRGISGEMLKTAWRGNFRRLLALNRDIMLRSLLLQLCFGAITVLGARLGSDIIAVNAVLMTLLTFTAYALDGFAYAVEAHSGQAYGARDGSQLLDVWRAACRQSGIVALLFSVVYLLAGEHIIALLTSLTQIQQLADRYLIWQVILPVVGVWCYLLDGMFIGATRATEMRNSMAVAAAGFALTLLTLPWLGNHALWLALTVFLALRGLSLAAIWRRHWRNGTWFAAT.

12 helical membrane passes run P2–L22, L29–V49, L63–L83, L111–L131, W154–Q174, V180–G200, G207–V227, L265–I285, A289–V309, I338–L358, I373–I393, and L416–A436.

This sequence belongs to the multi antimicrobial extrusion (MATE) (TC 2.A.66.1) family.

It is found in the cell inner membrane. The sequence is that of DNA damage-inducible protein F (dinF) from Escherichia coli (strain K12).